A 254-amino-acid chain; its full sequence is Small ribosomal subunit protein uS2 (254 aa).

The protein belongs to the universal ribosomal protein uS2 family.

This is Small ribosomal subunit protein uS2 from Legionella pneumophila (strain Lens).